The sequence spans 83 residues: Putative defensin-like protein 66 (83 aa).

Positions 1–22 (MGSSRLMITFIVVAMLAISSDL) are cleaved as a signal peptide. 4 disulfides stabilise this stretch: cysteine 38–cysteine 82, cysteine 42–cysteine 65, cysteine 51–cysteine 80, and cysteine 55–cysteine 81.

It belongs to the DEFL family.

It is found in the secreted. This chain is Putative defensin-like protein 66, found in Arabidopsis thaliana (Mouse-ear cress).